Reading from the N-terminus, the 89-residue chain is UPF0335 protein RPC_3979 (89 aa).

The protein belongs to the UPF0335 family.

The sequence is that of UPF0335 protein RPC_3979 from Rhodopseudomonas palustris (strain BisB18).